The primary structure comprises 322 residues: uncharacterized protein (322 aa).

4 helical membrane passes run 24–44 (LLHL…IQIT), 68–88 (LFFE…LIFI), 100–120 (IVTS…TPTF), and 125–145 (VQLI…MPSL).

It localises to the cell membrane. This is an uncharacterized protein from Bacillus subtilis (strain 168).